A 230-amino-acid chain; its full sequence is Acetyltransferase (230 aa).

The N-acetyltransferase domain occupies 143–230; it reads RYLDGKVICD…RVAVYKARQT (88 aa).

Its pathway is mycotoxin biosynthesis. Acetyltransferase; part of the satratoxin SC3 cluster involved in the biosynthesis of satratoxins, trichothecene mycotoxins that are associated with human food poisonings. Satratoxins are suggested to be made by products of multiple gene clusters (SC1, SC2 and SC3) that encode 21 proteins in all, including polyketide synthases, acetyltransferases, and other enzymes expected to modify the trichothecene skeleton. SC1 encodes 10 proteins, SAT1 to SAT10. The largest are SAT8, which encodes a putative polyketide synthase (PKS) with a conventional non-reducing architecture, and SAT10, a putative protein containing four ankyrin repeats and thus may be involved in protein scaffolding. The putative short-chain reductase SAT3 may assist the PKS in some capacity. SAT6 contains a secretory lipase domain and acts probably as a trichothecene esterase. SAT5 encodes a putative acetyltransferase, and so, with SAT6, may affect endogenous protection from toxicity. The probable transcription factor SAT9 may regulate the expression of the SC1 cluster. SC2 encodes proteins SAT11 to SAT16, the largest of which encodes the putative reducing PKS SAT13. SAT11 is a cytochrome P450 monooxygenase, while SAT14 and SAT16 are probable acetyltransferases. The SC2 cluster may be regulated by the transcription factor SAT15. SC3 is a small cluster that encodes 5 proteins, SAT17 to SAT21. SAT21 is a putative MFS-type transporter which may have a role in exporting secondary metabolites. The four other proteins putatively encoded in SC3 include the taurine hydroxylase-like protein SAT17, the O-methyltransferase SAT18, the acetyltransferase SAT19, and the Cys6-type zinc finger SAT20, the latter being probably involved in regulation of SC3 expression. This chain is Acetyltransferase, found in Stachybotrys chartarum (strain CBS 109288 / IBT 7711) (Toxic black mold).